We begin with the raw amino-acid sequence, 497 residues long: MGLFGLLKYAYSNRLVKHDAITTPPGIMTPIAIDLWNVMYTLMEKFDQERNFPLDGAAVTARCFFSLLRLLLKRSYYPIFVSDRGIYGDGRVKQGAKAIVSQTMSSYGGSGRLSSACFTGDEHDTEFQEDPEENDVSVPPQDTCPPTEISAGYVEPERKCEHSSTRWSALDGAPRLSYRLCVNLIRHLGYPYVNACNLEADDVCANLYHTNTVAQIYTTDTDLILMGCDIILDIMPLFPPTLRCCDVLMDLGVTYDEFLTEFVRCHTDLHEPQTLASVQSVISSLHSPPDEDEGADMPQTPSGHSWRCPNERRVISWRRQDDHDYDSSTEDSDQSDSSEEEEECPAGKGFGYRENPAVETCKRRTRPRRSAEASGRILHLKYTSRYPPIMESAPRALVRMAPPKTRHEVLERKFVKHVVSMLTPERRGSLSIMRRLPITQEPSNFSLVHDTLKNLVSEHEIARELANMFWNHIPTPTDYNTVLVNYWDDCGHRRQWS.

2 disordered regions span residues 122–142 and 280–373; these read EHDT…PPQD and SVIS…SAEA. A compositionally biased stretch (basic and acidic residues) spans 309 to 326; the sequence is PNERRVISWRRQDDHDYD. Residues 327–344 show a composition bias toward acidic residues; sequence SSTEDSDQSDSSEEEEEC.

Belongs to the herpesviridae VHS protein family.

Its subcellular location is the virion. Functionally, minor structural protein that acts as an endoribonuclease during lytic infection. Degrades host mRNAs in the cytoplasm by cutting them at preferred sites, including some in regions of translation initiation. In Equine herpesvirus 1 (strain Ab4p) (EHV-1), this protein is Virion host shutoff protein.